We begin with the raw amino-acid sequence, 534 residues long: Phosphoenolpyruvate carboxykinase (ATP) (534 aa).

Residues Arg59, Tyr200, and Lys206 each coordinate substrate. Residues Lys206, His225, and 242–250 (GLSGTGKTT) each bind ATP. Residues Lys206 and His225 each contribute to the Mn(2+) site. Asp263 is a binding site for Mn(2+). ATP-binding positions include Glu291, Arg327, 443–444 (RI), and Thr449. Residue Arg327 coordinates substrate.

The protein belongs to the phosphoenolpyruvate carboxykinase (ATP) family. It depends on Mn(2+) as a cofactor.

The protein resides in the cytoplasm. It catalyses the reaction oxaloacetate + ATP = phosphoenolpyruvate + ADP + CO2. It functions in the pathway carbohydrate biosynthesis; gluconeogenesis. In terms of biological role, involved in the gluconeogenesis. Catalyzes the conversion of oxaloacetate (OAA) to phosphoenolpyruvate (PEP) through direct phosphoryl transfer between the nucleoside triphosphate and OAA. In Lachnospira eligens (strain ATCC 27750 / DSM 3376 / VPI C15-48 / C15-B4) (Eubacterium eligens), this protein is Phosphoenolpyruvate carboxykinase (ATP).